A 165-amino-acid chain; its full sequence is Phosphopantetheine adenylyltransferase (165 aa).

Threonine 9 serves as a coordination point for substrate. ATP is bound by residues 9-10 (TF) and histidine 17. Substrate contacts are provided by lysine 41, leucine 73, and arginine 87. Residues 88–90 (GLR), glutamate 98, and 123–129 (YMFISAT) contribute to the ATP site.

It belongs to the bacterial CoaD family. Homohexamer. The cofactor is Mg(2+).

The protein resides in the cytoplasm. It carries out the reaction (R)-4'-phosphopantetheine + ATP + H(+) = 3'-dephospho-CoA + diphosphate. It functions in the pathway cofactor biosynthesis; coenzyme A biosynthesis; CoA from (R)-pantothenate: step 4/5. Reversibly transfers an adenylyl group from ATP to 4'-phosphopantetheine, yielding dephospho-CoA (dPCoA) and pyrophosphate. This is Phosphopantetheine adenylyltransferase from Nitrosospira multiformis (strain ATCC 25196 / NCIMB 11849 / C 71).